The chain runs to 478 residues: Proline--tRNA ligase (478 aa).

Belongs to the class-II aminoacyl-tRNA synthetase family. ProS type 3 subfamily. In terms of assembly, homodimer.

Its subcellular location is the cytoplasm. It catalyses the reaction tRNA(Pro) + L-proline + ATP = L-prolyl-tRNA(Pro) + AMP + diphosphate. Catalyzes the attachment of proline to tRNA(Pro) in a two-step reaction: proline is first activated by ATP to form Pro-AMP and then transferred to the acceptor end of tRNA(Pro). The chain is Proline--tRNA ligase from Ruminiclostridium cellulolyticum (strain ATCC 35319 / DSM 5812 / JCM 6584 / H10) (Clostridium cellulolyticum).